A 992-amino-acid polypeptide reads, in one-letter code: GATOR2 complex protein WDR59 (992 aa).

WD repeat units lie at residues 57–98, 103–143, 146–185, 189–229, 232–276, 278–318, and 319–362; these read QSKW…GEVG, GHTR…KPTV, SAVA…TAVE, AHLS…KYLN, PCQV…APVH, FVGH…RVDY, and QMQR…SLSH. The segment at 343 to 373 is disordered; it reads PEPEKTPHPQDIDHQPSLSHGEEDAIKEDPP. The segment covering 344–373 has biased composition (basic and acidic residues); that stretch reads EPEKTPHPQDIDHQPSLSHGEEDAIKEDPP. The RWD domain maps to 393-494; sequence QEFSLINVQI…RQLVSCLESF (102 aa). Ser564 carries the post-translational modification Phosphoserine. The WD 8 repeat unit spans residues 660 to 706; the sequence is KSLGELYILNVNDTQETCQKNATSAMLVGRKDLVQVWSLATVATDLC. Phosphoserine is present on residues Ser839, Ser840, and Ser848. The disordered stretch occupies residues 849–870; it reads LTYSDPRERERDQHDKNKRLLD. Positions 853–869 are enriched in basic and acidic residues; the sequence is DPRERERDQHDKNKRLL. The segment at 919–939 adopts a C4-type zinc-finger fold; sequence YCSHCRSEVRGTQCAICKGFT. The Zn(2+) site is built by Cys920, Cys923, Cys932, Cys935, Cys945, Cys956, His961, His964, His967, Cys978, Cys982, Cys984, and Cys986. Residues 940–989 form an RING-type; atypical zinc finger; sequence FQCAICHVAVRGSSNFCLTCGHGGHTSHMMEWFRTQEVCPTGCGCHCLLE.

This sequence belongs to the WD repeat WDR59 family. Component of the GATOR2 subcomplex, composed of MIOS, SEC13, SEH1L, WDR24 and WDR59. The GATOR2 complex interacts with CASTOR1 and CASTOR2; the interaction is negatively regulated by arginine. The GATOR2 complex interacts with SESN1, SESN2 and SESN3; the interaction is negatively regulated by amino acids. Interacts with DDB1-CUL4A/B E3 ligase complexes.

Its subcellular location is the lysosome membrane. Its activity is regulated as follows. The GATOR2 complex is negatively regulated by the upstream amino acid sensors CASTOR1 and SESN2, which sequester the GATOR2 complex in absence of amino acids. In the presence of abundant amino acids, GATOR2 is released from CASTOR1 and SESN2 and activated. In terms of biological role, as a component of the GATOR2 complex, functions as an activator of the amino acid-sensing branch of the mTORC1 signaling pathway. The GATOR2 complex indirectly activates mTORC1 through the inhibition of the GATOR1 subcomplex. GATOR2 probably acts as an E3 ubiquitin-protein ligase toward GATOR1. In the presence of abundant amino acids, the GATOR2 complex mediates ubiquitination of the NPRL2 core component of the GATOR1 complex, leading to GATOR1 inactivation. In the absence of amino acids, GATOR2 is inhibited, activating the GATOR1 complex. In Mus musculus (Mouse), this protein is GATOR2 complex protein WDR59.